Consider the following 117-residue polypeptide: Iron-sulfur cluster insertion protein ErpA (117 aa).

Residues Cys-45, Cys-109, and Cys-111 each coordinate iron-sulfur cluster.

The protein belongs to the HesB/IscA family. Homodimer. Iron-sulfur cluster is required as a cofactor.

Functionally, required for insertion of 4Fe-4S clusters for at least IspG. This chain is Iron-sulfur cluster insertion protein ErpA, found in Hahella chejuensis (strain KCTC 2396).